The sequence spans 131 residues: mRNA stability protein IGO2 (131 aa).

Residues 1–13 (MSEDLSPTSSRVD) show a composition bias toward polar residues. Residues 1–26 (MSEDLSPTSSRVDLSNPHGFTKEGVD) form a disordered region. N-acetylserine is present on Ser2. A phosphoserine mark is found at Ser6, Ser63, Ser108, and Ser119. Residues 81 to 131 (VNNSSNNLPVTNPSGLRESIIRRRMSSSSGGDSISRQGSISSGPPPRSPNK) are disordered. Positions 106–122 (SSSSGGDSISRQGSISS) are enriched in low complexity.

It belongs to the endosulfine family. Post-translationally, phosphorylated by RIM15.

Its subcellular location is the cytoplasm. The protein resides in the nucleus. In terms of biological role, required for TORC1 to properly control gene expression and chronological life span. Plays an essential role in initiation of the G0 program by preventing the degradation of specific nutrient-regulated mRNAs via the 5'-3' mRNA decay pathway. The protein is mRNA stability protein IGO2 (IGO2) of Saccharomyces cerevisiae (strain ATCC 204508 / S288c) (Baker's yeast).